A 160-amino-acid polypeptide reads, in one-letter code: Nuclear transcription factor Y subunit B-5 (160 aa).

A DNA-binding region spans residues L56–G62. Residues M83–V94 form a subunit association domain (SAD) region.

The protein belongs to the NFYB/HAP3 subunit family. Heterotrimeric transcription factor composed of three components, NF-YA, NF-YB and NF-YC. NF-YB and NF-YC must interact and dimerize for NF-YA association and DNA binding. As to expression, expressed in flowers and siliques.

It is found in the nucleus. In terms of biological role, component of the NF-Y/HAP transcription factor complex. The NF-Y complex stimulates the transcription of various genes by recognizing and binding to a CCAAT motif in promoters. The polypeptide is Nuclear transcription factor Y subunit B-5 (NFYB5) (Arabidopsis thaliana (Mouse-ear cress)).